Reading from the N-terminus, the 1201-residue chain is Zinc finger protein sdc-1 (1201 aa).

C2H2-type zinc fingers lie at residues 117-139 (LTCAHCDWSFDNVMKLVRHRGVH), 145-168 (YMCQVCLTLFGHTYNLFMHWRTSC), 233-254 (SSCHLCHLPVPNKFLEAHGNVH), 268-290 (YFCHICGTVFIEQDNLFKHWRLH), 486-513 (IVCHKCDSKKLTITFSTEVRLKYHLLRH), 521-543 (YHCAICKIIVYNRSHEEHWINDC), and 652-674 (VVCFHCGTRCHYTLLHDHLDYCH). Residues 1164–1201 (KRRNSETREHELIELDTDDLNEPSTSDGRYSFGHHGYR) form a disordered region. Residues 1167 to 1176 (NSETREHELI) show a composition bias toward basic and acidic residues.

Component of the SDC complex, which consists of sdc-1, sdc-2 and sdc-3. Within the complex, interacts with sdc-2 and sdc-3.

It localises to the nucleus. Its subcellular location is the chromosome. In terms of biological role, embryonic transcription factor regulating downstream genes involved specifically in the sex determination and dosage compensation pathways, or regulating other genes involved in the coordinate control of both processes. Component of the SDC complex that functions in sex determination and in X chromosome dosage compensation specifically in hermaphrodite (XX) animals. Involved in the recruitment of the condensin I-like dosage compensation complex to the male sex-determining autosomal gene her-1, thereby contributing to its repression and initiating hermaphrodite sexual development. Similarly, might contribute to X-linked gene repression through recruitment of the dosage compensation complex to the X chromosomes in hermaphrodites. Seems to be involved in the depletion of histone H4 lysine 16 acetylation (H4K16ac) on dosage compensated X chromosomes. Plays a role in developmental rate and body fat regulation downstream of the TOR complex 2 pathway. The polypeptide is Zinc finger protein sdc-1 (sdc-1) (Caenorhabditis elegans).